Consider the following 301-residue polypeptide: Ribonuclease H2 subunit A (301 aa).

Met-1 carries the post-translational modification N-acetylmethionine. In terms of domain architecture, RNase H type-2 spans 28-251 (PCVLGVDEAG…AQAILEKEAE (224 aa)). The a divalent metal cation site is built by Asp-34, Glu-35, and Asp-142. Residue Thr-217 is modified to Phosphothreonine. Over residues 255-264 (WEDSEAEEDP) the composition is skewed to acidic residues. The tract at residues 255 to 284 (WEDSEAEEDPERPGKITSYFSQGPQTCRPQ) is disordered. Ser-258 carries the post-translational modification Phosphoserine. Residues 272–282 (SYFSQGPQTCR) show a composition bias toward polar residues.

It belongs to the RNase HII family. Eukaryotic subfamily. As to quaternary structure, the RNase H2 complex is a heterotrimer composed of the catalytic subunit RNASEH2A and the non-catalytic subunits RNASEH2B and RNASEH2C. The cofactor is Mn(2+). Requires Mg(2+) as cofactor.

Its subcellular location is the nucleus. The catalysed reaction is Endonucleolytic cleavage to 5'-phosphomonoester.. Functionally, catalytic subunit of RNase HII, an endonuclease that specifically degrades the RNA of RNA:DNA hybrids. Participates in DNA replication, possibly by mediating the removal of lagging-strand Okazaki fragment RNA primers during DNA replication. Mediates the excision of single ribonucleotides from DNA:RNA duplexes. This Mus musculus (Mouse) protein is Ribonuclease H2 subunit A (Rnaseh2a).